Reading from the N-terminus, the 975-residue chain is E3 ubiquitin-protein ligase BRE1A (975 aa).

The disordered stretch occupies residues 1 to 37; sequence MSGIGSKRAAGEPGTSVPPEKKTAVEDSGTTVETIKL. Residue Lys21 is modified to N6-acetyllysine. Residue Ser41 is modified to Phosphoserine. The stretch at 43 to 90 forms a coiled coil; that stretch reads TEELDIRTLQTKNRKLAEMLDQRQAIEDELREHIEKLERRQATDDASL. Residues 125–155 are disordered; it reads KALVVPEPEPDSDSNQERKDDRERGEGQEPA. Phosphoserine is present on residues Ser136 and Ser138. The span at 139–151 shows a compositional bias: basic and acidic residues; the sequence is NQERKDDRERGEG. Coiled coils occupy residues 168–375 and 429–898; these read EEME…EEVV and SLHK…TTKK. An N6-acetyllysine mark is found at Lys348 and Lys510. The segment at 507-622 is disordered; sequence DLNKTRLRSG…GKHDDGRKKE (116 aa). The residue at position 522 (Ser522) is a Phosphoserine. The span at 527 to 540 shows a compositional bias: basic and acidic residues; that stretch reads EDPKDEPAELKQDS. Residues 543 to 552 are compositionally biased toward polar residues; that stretch reads LATQSAASKA. Positions 558–622 are enriched in basic and acidic residues; that stretch reads NEIKSKRDEE…GKHDDGRKKE (65 aa). Residue Ser562 is modified to Phosphoserine. Residues 922-961 form an RING-type zinc finger; that stretch reads CPCCNMRKKDAVLTKCFHVFCFECVKTRYDTRQRKCPKCN.

The protein belongs to the BRE1 family. As to quaternary structure, component of the RNF20/40 complex (also known as BRE1 complex) probably composed of 2 copies of RNF20/BRE1A and 2 copies of RNF40/BRE1B. Interacts with UBE2E1/UBCH6. Interacts with p53/TP53 and WAC. Interacts with PAF1; the interaction mediates the association of the PAF1 and RNF20/40 complexes which is a prerequsite for recruitment of UBE2A/B. Interacts with PA2G4. Interacts with FBXL19.

The protein localises to the nucleus. The enzyme catalyses S-ubiquitinyl-[E2 ubiquitin-conjugating enzyme]-L-cysteine + [acceptor protein]-L-lysine = [E2 ubiquitin-conjugating enzyme]-L-cysteine + N(6)-ubiquitinyl-[acceptor protein]-L-lysine.. It functions in the pathway protein modification; protein ubiquitination. Its function is as follows. Component of the RNF20/40 E3 ubiquitin-protein ligase complex that mediates monoubiquitination of 'Lys-120' of histone H2B (H2BK120ub1). H2BK120ub1 gives a specific tag for epigenetic transcriptional activation and is also prerequisite for histone H3 'Lys-4' and 'Lys-79' methylation (H3K4me and H3K79me, respectively). It thereby plays a central role in histone code and gene regulation. The RNF20/40 complex forms a H2B ubiquitin ligase complex in cooperation with the E2 enzyme UBE2A or UBE2B; reports about the cooperation with UBE2E1/UBCH are contradictory. Required for transcriptional activation of Hox genes. Recruited to the MDM2 promoter, probably by being recruited by p53/TP53, and thereby acts as a transcriptional coactivator. Mediates the polyubiquitination of PA2G4 leading to its proteasome-mediated degradation. This is E3 ubiquitin-protein ligase BRE1A (RNF20) from Bos taurus (Bovine).